Consider the following 179-residue polypeptide: M-zodatoxin-Lt4b (179 aa).

The first 22 residues, 1–22 (MKFSIIALALAVAFVCVAESRS), serve as a signal peptide directing secretion. A propeptide spanning residues 23 to 43 (EEEGYDVSEEIQAEELEEAAR) is cleaved from the precursor. Residues 40 to 43 (EAAR) carry the Processing quadruplet motif 1 motif. Glutamine 61 is subject to Glutamine amide. Positions 63–66 (REDS) match the Inverted processing quadruplet motif 1 motif. A propeptide spanning residues 63 to 71 (REDSEDAGR) is cleaved from the precursor. Residues 68 to 71 (DAGR) carry the Processing quadruplet motif 2 motif. Glutamine 89 is subject to Glutamine amide. The short motif at 91–94 (REDT) is the Inverted processing quadruplet motif 2 element. A propeptide spanning residues 91–99 (REDTEEAGR) is cleaved from the precursor. The Processing quadruplet motif 3 signature appears at 96–99 (EAGR). Residue glutamine 117 is modified to Glutamine amide. Positions 119 to 122 (REDS) match the Inverted processing quadruplet motif 3 motif. Residues 119-127 (REDSEEAGR) constitute a propeptide that is removed on maturation. The short motif at 124 to 127 (EAGR) is the Processing quadruplet motif 4 element. Glutamine amide is present on glutamine 145. An Inverted processing quadruplet motif 4 motif is present at residues 147–150 (REDT). The propeptide occupies 147-154 (REDTEEAR). A Processing quadruplet motif 5 motif is present at residues 151-154 (EEAR). Phenylalanine 178 carries the post-translational modification Phenylalanine amide.

The protein belongs to the cationic peptide 03 (latarcin) family. 04 subfamily. In terms of processing, cleavage of the propeptide depends on the processing quadruplet motif (PQM) (XXXR, with at least one of X being E) and the inverted PQM (RXXX, with at least one of X being E). As to expression, expressed by the venom gland.

It is found in the secreted. M-zodatoxin-Lt4b: Has antimicrobial activity against Gram-positive bacteria (A.globiformis VKM Ac-1112 (MIC=0.3 uM), and B.subtilis VKM B-501 (MIC=1.1 uM)), Gram-negative bacteria (E.coli DH5-alpha (MIC=4.4 uM), E.coli MH1 (MIC=4.4 uM), and P.aeruginosa PAO1 (MIC=&gt;35 uM)), and yeasts (P.pastoris GS115 (MIC=&gt;35 uM), and S.cerevisiae Y190 (MIC=35 uM)). Does not have hemolytic activity against rabbit erythrocytes. Causes paralysis, but is not lethal when injected into insect (M.domestica) larvae. Functionally, shows no antimicrobial activity against Gram-positive bacterium B.subtilis B-501 or Gram-negative bacterium E.coli DH5-alpha at concentration up to 20 uM. The sequence is that of M-zodatoxin-Lt4b from Lachesana tarabaevi (Spider).